We begin with the raw amino-acid sequence, 511 residues long: GMP synthase [glutamine-hydrolyzing] (511 aa).

One can recognise a Glutamine amidotransferase type-1 domain in the interval 6-196 (LVLVLDFGSQ…VFDVCGCTGD (191 aa)). The active-site Nucleophile is cysteine 83. Active-site residues include histidine 170 and glutamate 172. Residues 197–386 (WSIENFIDME…LGVPDRIVWR (190 aa)) enclose the GMPS ATP-PPase domain. ATP is bound at residue 224 to 230 (SGGVDSS).

As to quaternary structure, homodimer.

The enzyme catalyses XMP + L-glutamine + ATP + H2O = GMP + L-glutamate + AMP + diphosphate + 2 H(+). Its pathway is purine metabolism; GMP biosynthesis; GMP from XMP (L-Gln route): step 1/1. Functionally, catalyzes the synthesis of GMP from XMP. The chain is GMP synthase [glutamine-hydrolyzing] from Oceanobacillus iheyensis (strain DSM 14371 / CIP 107618 / JCM 11309 / KCTC 3954 / HTE831).